The chain runs to 183 residues: Small ribosomal subunit protein bS20c (183 aa).

Residues 1–68 (MAAISMACVS…FQRRGFSVVC (68 aa)) constitute a chloroplast transit peptide. Residues 79 to 99 (AAKRTRQAETRRLRNKARKSE) are disordered.

In terms of assembly, component of the chloroplast small ribosomal subunit (SSU). Mature 70S chloroplast ribosomes of higher plants consist of a small (30S) and a large (50S) subunit. The 30S small subunit contains 1 molecule of ribosomal RNA (16S rRNA) and 24 different proteins. The 50S large subunit contains 3 rRNA molecules (23S, 5S and 4.5S rRNA) and 33 different proteins.

It localises to the plastid. It is found in the chloroplast. Component of the chloroplast ribosome (chloro-ribosome), a dedicated translation machinery responsible for the synthesis of chloroplast genome-encoded proteins, including proteins of the transcription and translation machinery and components of the photosynthetic apparatus. The chain is Small ribosomal subunit protein bS20c (RPS20) from Spinacia oleracea (Spinach).